A 267-amino-acid polypeptide reads, in one-letter code: NAD kinase (267 aa).

The Proton acceptor role is filled by aspartate 45. NAD(+) contacts are provided by residues 45–46 (DG), 121–122 (NE), lysine 147, aspartate 149, 160–165 (TAYSKS), and alanine 184.

It belongs to the NAD kinase family. The cofactor is a divalent metal cation.

It localises to the cytoplasm. It carries out the reaction NAD(+) + ATP = ADP + NADP(+) + H(+). Involved in the regulation of the intracellular balance of NAD and NADP, and is a key enzyme in the biosynthesis of NADP. Catalyzes specifically the phosphorylation on 2'-hydroxyl of the adenosine moiety of NAD to yield NADP. In Lactobacillus gasseri (strain ATCC 33323 / DSM 20243 / BCRC 14619 / CIP 102991 / JCM 1131 / KCTC 3163 / NCIMB 11718 / NCTC 13722 / AM63), this protein is NAD kinase.